Consider the following 92-residue polypeptide: Large ribosomal subunit protein eL37 (92 aa).

Residues cysteine 19, cysteine 22, cysteine 34, and cysteine 37 each contribute to the Zn(2+) site. The C4-type zinc finger occupies 19 to 37 (CRRCGRSSYHIQKSKCAQC).

Belongs to the eukaryotic ribosomal protein eL37 family. Requires Zn(2+) as cofactor.

Binds to the 23S rRNA. The protein is Large ribosomal subunit protein eL37 (RpL37) of Spodoptera frugiperda (Fall armyworm).